A 467-amino-acid polypeptide reads, in one-letter code: ATP synthase subunit beta (467 aa).

ATP is bound at residue 156 to 163 (GGAGVGKT).

The protein belongs to the ATPase alpha/beta chains family. F-type ATPases have 2 components, CF(1) - the catalytic core - and CF(0) - the membrane proton channel. CF(1) has five subunits: alpha(3), beta(3), gamma(1), delta(1), epsilon(1). CF(0) has three main subunits: a(1), b(2) and c(9-12). The alpha and beta chains form an alternating ring which encloses part of the gamma chain. CF(1) is attached to CF(0) by a central stalk formed by the gamma and epsilon chains, while a peripheral stalk is formed by the delta and b chains.

The protein resides in the cell inner membrane. The enzyme catalyses ATP + H2O + 4 H(+)(in) = ADP + phosphate + 5 H(+)(out). Produces ATP from ADP in the presence of a proton gradient across the membrane. The catalytic sites are hosted primarily by the beta subunits. This chain is ATP synthase subunit beta, found in Cupriavidus necator (strain ATCC 17699 / DSM 428 / KCTC 22496 / NCIMB 10442 / H16 / Stanier 337) (Ralstonia eutropha).